A 341-amino-acid chain; its full sequence is Anthranilate phosphoribosyltransferase (341 aa).

Residues G84, 87-88 (GD), T92, 94-97 (NIST), 112-120 (KHGNRSVSS), and S124 each bind 5-phospho-alpha-D-ribose 1-diphosphate. G84 lines the anthranilate pocket. S96 is a Mg(2+) binding site. Residue N115 coordinates anthranilate. R170 lines the anthranilate pocket. Mg(2+) is bound by residues D229 and E230.

The protein belongs to the anthranilate phosphoribosyltransferase family. As to quaternary structure, homodimer. Requires Mg(2+) as cofactor.

The enzyme catalyses N-(5-phospho-beta-D-ribosyl)anthranilate + diphosphate = 5-phospho-alpha-D-ribose 1-diphosphate + anthranilate. The protein operates within amino-acid biosynthesis; L-tryptophan biosynthesis; L-tryptophan from chorismate: step 2/5. Its function is as follows. Catalyzes the transfer of the phosphoribosyl group of 5-phosphorylribose-1-pyrophosphate (PRPP) to anthranilate to yield N-(5'-phosphoribosyl)-anthranilate (PRA). In Polynucleobacter asymbioticus (strain DSM 18221 / CIP 109841 / QLW-P1DMWA-1) (Polynucleobacter necessarius subsp. asymbioticus), this protein is Anthranilate phosphoribosyltransferase.